The primary structure comprises 177 residues: Prorelaxin (177 aa).

Positions 1 to 22 are cleaved as a signal peptide; that stretch reads MSCKFVLQLLGFWLLLSQPCRA. Intrachain disulfides connect Cys36–Cys164, Cys48–Cys177, and Cys163–Cys168. A propeptide spans 64-149 (connecting peptide); it reads MTEEAVSSFI…LKSLYLDTLS (86 aa). The segment at 80–114 is disordered; the sequence is FDTMPNLSEKPKTALPEGHPSLPEQQQYVPVSSDS. Over residues 102-114 the composition is skewed to polar residues; it reads PEQQQYVPVSSDS.

This sequence belongs to the insulin family. In terms of assembly, heterodimer of a B chain and an A chain linked by two disulfide bonds.

The protein resides in the secreted. Its function is as follows. Relaxin is an ovarian hormone that acts with estrogen to produce dilatation of the birth canal in many mammals. It bears mature young, and allows separation of the pelvic bones. This is Prorelaxin (RLN) from Mesocricetus auratus (Golden hamster).